Consider the following 558-residue polypeptide: WW domain-containing adapter protein with coiled-coil (558 aa).

Disordered regions lie at residues 1–129 (MVMY…WSEH), 159–244 (QRQK…SPAP), and 321–461 (VAQQ…APGR). Polar residues predominate over residues 22-32 (QPYQTLKYSSK). Composition is skewed to basic and acidic residues over residues 33–46 (SHPDHRHEKMRDSN) and 56–70 (RRSDSPDNKHMDNTG). Residues 72 to 82 (GRAKAIHPHRG) are compositionally biased toward basic residues. Low complexity predominate over residues 99–116 (NHSSLHSSNSHSNPNKSS). The WW domain occupies 120–153 (FEPADDWSEHISSSGKKYYYNCRTEVSQWEKPKE). Positions 175 to 184 (PKDRDYRREA) are enriched in basic and acidic residues. A compositionally biased stretch (polar residues) spans 188-200 (TPASYSSTKSSIA). The span at 204–217 (PSSLTPSSSSAAVS) shows a compositional bias: low complexity. Polar residues-rich tracts occupy residues 223 to 234 (NSASSASGSTVP) and 321 to 378 (VAQQ…MTVK). Positions 402-431 (SPRTLQRQSSQRSPSPGPNHMGSNSSSSSN) are enriched in low complexity. Residues 432 to 443 (NGGGGGGQGPGV) are compositionally biased toward gly residues. Residues 529-555 (QATLREQRILFLRQQIKELEKLKNQNS) are a coiled coil.

The protein resides in the nucleus. In terms of biological role, acts as a linker between gene transcription and histone H2B monoubiquitination at 'Lys-120' (H2BK120ub1). Positive regulator of amino acid starvation-induced autophagy. Positively regulates MTOR activity. May negatively regulate the ubiquitin proteasome pathway. This Danio rerio (Zebrafish) protein is WW domain-containing adapter protein with coiled-coil (waca).